The chain runs to 236 residues: Small ribosomal subunit protein uS2c (236 aa).

This sequence belongs to the universal ribosomal protein uS2 family.

The protein resides in the plastid. This is Small ribosomal subunit protein uS2c (rps2) from Cuscuta gronovii (Common dodder).